A 142-amino-acid chain; its full sequence is Hemoglobin subunit alpha-3 (142 aa).

The 141-residue stretch at 2–142 (VLSAADKSNV…VSTVLTSKYR (141 aa)) folds into the Globin domain. His59 lines the O2 pocket. His88 contacts heme b.

The protein belongs to the globin family. As to quaternary structure, heterotetramer of two alpha chains and two beta chains. Red blood cells.

Functionally, involved in oxygen transport from the lung to the various peripheral tissues. The polypeptide is Hemoglobin subunit alpha-3 (Bubalus bubalis (Domestic water buffalo)).